The primary structure comprises 430 residues: Asparagine--tRNA ligase (430 aa).

This sequence belongs to the class-II aminoacyl-tRNA synthetase family. In terms of assembly, homodimer.

The protein resides in the cytoplasm. It catalyses the reaction tRNA(Asn) + L-asparagine + ATP = L-asparaginyl-tRNA(Asn) + AMP + diphosphate + H(+). The sequence is that of Asparagine--tRNA ligase from Staphylococcus haemolyticus (strain JCSC1435).